A 1979-amino-acid polypeptide reads, in one-letter code: MVFTFKNKKKKKEASSDKVSKESFNEEDNENNEKREKSDSWYKKIIETKGKSKTKYKNDNSLDDNINEDIINNNNNNNNDNNNDNNNDNNNDNNNDNNNDNNNENNNDNNNFNNYSDEISKNIIHKDNELENQLKDTLKSISSLSNKIVNYESKIEELEKELKEVKDKNIDNNDYENKLKEKEDFVKQKIDMLNEKENLLQEKELDINKREKKINEKEKNIIKKEETFHNIEKEYLEKNKERETISIEIIDIKKHLEKLKIEIKEKKEDLENLNKKLLSKENVLKELKGCVKEKNETINSLNDNIIEKEKKYKLLEYELEEKNKQIDLLNKQEKEKEKEKEREKEKEREKEKEKEYDTLIKELKDEKISILEKVHSIKVREMDIEKREHNFLHMEDQLKDLKNSFVKNNNQLKVYKCEIKNLKTELEKKEKELKDIENVSKEEINKLINQLNEKEKQILAFNKNHKEEIHGLKEELKESVKITKIETQELQEMVDIKQKELDQLQEKYNAQIESISIELSKKEKEYNQYKNTYIEEINNLNEKLEETNKEYTNLQNNYTNEINMLNNDIHMLNGNIKTMNTQISTLKNDVHLLNEQIDKLNNEKGTLNSKISELNVQIMDLKEEKDFLNNQIVDLSNQIDLLTRKMEEKENKMLEQENKYKQEMELLRGNIKSSENILNNDEEVCDLKRKLSLKESEMKMMKEEHDKKLAELKDDCDVRIREMNEKNEDKINMLKEEYEDKINTLKEQNEDKINTLKEQNEDKINTLKEEYEHKINTMKEEYEHKINTLNEQNEHKINTLNEQNEHKINTMKEEYEDKMNTLNEQNEDKMNSLKEEYENKINQINSNNEIKIKDVVNEYIEEVDKLKVTLDEKKKQFDKEINYAHIKAHEKEQILLTEMEELKCQRDNKYSDLYEKYIKLIKSICMIINIECCDDIENEDIIRRIEEYINNNKGLKKEVEEKEHKRHSSFNILKSKEKFFKNSIEDKSHELKKKHEKDLLSKDKEIEEKNKKIKELNNDIKKLQDEILVYKKQSNAQQVDHKKKSWILLKDKSKEKIKDKENQINVEKNEEKDLKKKDDEIRILNEELVKYKTILYNLKKDPLLQNQDLLSKIDINSLTINEGMCVDKIEEHILDYDEEINKSRSNLFQLKNEICSLTTEVMELNNKKNELIEENNKLNLVDQGKKKLKKDVEKQKKEIEKLNKQLTKCNKQIDELNEEVEKLNNENIELITYSNDLNNKFDMKENNLMMKLDENEDNIKKMKSKIDDMEKEIKYREDEKKRNLNEINNLKKKNEDMCIKYNEMNIKYGDICVKYEEMSLTYKETSLKYEQIKVKYDEKCSQYDEIRFQYDEKCFQYDEINKKYGALLNINITNKMVDSKVDRNNNEIISVDNKVEGIANYLKQIFELNEEIIRLKGEINKISLLYSNELNEKNSYDINMKHIQEQLLFLEKTNKENEEKIINLTSQYSDAYKKKSDESKLCGAQFVDDVNIYGNISNNNIRTNEYKYEEMFDTNIEEKNGMHLSKYIHLLEENKFRCMKIIYENENIKSSNKIIGLYNYSRYYGLREDLCKEEIVPSKIGNISNKNENNNKKNNTCDGYDEKVTIVLCIILNEIIKFLFLNDEYVLLFEKIHKNVWKRMYIPEEIKFFILKYITLLNNLRDYIISVHNNMKNEKYDECWFLFQHYFERSSDVRKEMVHFLLERKSQENLISFKSKLKSKKEKILTMDILNFSKEHMQLKTIAHLRKEINYEKLSKDTLNRDYNLLLYKYQECVSKLKRVKNLMKEINQNVFIEKYDDISKELDNFSDGYNEQNEQHVMDPILLNNNKNKNNKLITEHNNPIINRLTNFTQNRDSKYKNKIMDDVKQRKINSTMNNTNKNGINIIYNHYENLNKPNYNDNINRLNSYHQNIHIANSIHPNRNQNKSFLTNQANSTYSVMKNYINSDKPNLNGKKSVRNIFNEIVDENVNKTFVHKSVFF.

Residues 1–12 (MVFTFKNKKKKK) show a composition bias toward basic residues. 2 disordered regions span residues 1–42 (MVFT…DSWY) and 54–116 (TKYK…NNYS). 2 stretches are compositionally biased toward basic and acidic residues: residues 13–24 (EASSDKVSKESF) and 31–42 (NNEKREKSDSWY). The span at 68-114 (EDIINNNNNNNNDNNNDNNNDNNNDNNNDNNNDNNNENNNDNNNFNN) shows a compositional bias: low complexity. Coiled coils occupy residues 127-366 (DNEL…LKDE), 412-666 (LKVY…EMEL), 693-876 (LKES…KKKQ), 992-1094 (KKKH…YKTI), 1126-1307 (VDKI…MNIK), and 1398-1467 (IANY…LTSQ).

Its subcellular location is the host cell membrane. The polypeptide is Repetitive organellar protein (Plasmodium falciparum (isolate 3D7)).